The following is a 202-amino-acid chain: Ras-related protein ORAB-1 (202 aa).

Residues glycine 15–cysteine 23, tyrosine 33–threonine 40, aspartate 63–glutamine 67, asparagine 121–aspartate 124, and serine 151–lysine 153 contribute to the GTP site. The Effector region motif lies at tyrosine 37–phenylalanine 45. A disordered region spans residues methionine 173–cysteine 202. Polar residues predominate over residues glycine 180–lysine 195. S-geranylgeranyl cysteine attachment occurs at residues cysteine 201 and cysteine 202.

The protein belongs to the small GTPase superfamily. Rab family.

Its subcellular location is the cell membrane. Its function is as follows. Protein transport. Probably involved in vesicular traffic. The chain is Ras-related protein ORAB-1 from Diplobatis ommata (Ocellated electric ray).